The primary structure comprises 404 residues: MTKPSNDEPPLTNVRDLEAMLPLEEEDLTADSQDLEYTAVAHRQQFSTDLVRLYLQDIGRIPLLKRDEEVHIAQQVQSYLRLVEIQNRAAESDAAIDQYQTAIAVHDQLLVQLGHRPSYERWAKILGQTVATLKQTLKSGKKRWAELAGLTVEELENIEKQGITAKAHMIKANLRLVVSVAKKYQNRGLELLDLIQEGTLGLERAVEKFDPTKGYRFSTYSYWWIRQGITRAIATQSRMIRLPVHITEKLNKIKRAQRKISQEKGHTPKIDEVAEELGMTPEQVREVLTQVPRSVSLELKVGQDKDTELMDLLETDTQSPEDELMREALQNDMQEILLDLTPREQEVIALRFGFQDGVAHSLSEIGRILNLSRERVRQIEAKALQKLRHPRRRDRIRDYYENLG.

The short motif at 193–206 (DLIQEGTLGLERAV) is the Polymerase core binding element. Residues 362–381 (LSEIGRILNLSRERVRQIEA) constitute a DNA-binding region (H-T-H motif).

The protein belongs to the sigma-70 factor family.

Functionally, sigma factors are initiation factors that promote the attachment of RNA polymerase to specific initiation sites and are then released. In Synechocystis sp. (strain ATCC 27184 / PCC 6803 / Kazusa), this protein is Probable RNA polymerase sigma-C factor (sigC).